Here is a 220-residue protein sequence, read N- to C-terminus: Ribonuclease P protein subunit p29 (220 aa).

Phosphoserine is present on Ser-10.

It belongs to the eukaryotic/archaeal RNase P protein component 1 family. As to quaternary structure, component of nuclear RNase P and RNase MRP ribonucleoproteins. RNase P consists of a catalytic RNA moiety and 10 different protein chains; POP1, POP4, POP5, POP7, RPP14, RPP21, RPP25, RPP30, RPP38 and RPP40. Within the RNase P complex, POP1, POP7 and RPP25 form the 'finger' subcomplex, POP5, RPP14, RPP40 and homodimeric RPP30 form the 'palm' subcomplex, and RPP21, POP4 and RPP38 form the 'wrist' subcomplex. All subunits of the RNase P complex interact with the catalytic RNA. Several subunits of RNase P are also part of the RNase MRP complex. RNase MRP consists of a catalytic RNA moiety and about 8 protein subunits; POP1, POP7, RPP25, RPP30, RPP38, RPP40 and possibly also POP4 and POP5.

It is found in the nucleus. Its subcellular location is the nucleolus. Functionally, component of ribonuclease P, a ribonucleoprotein complex that generates mature tRNA molecules by cleaving their 5'-ends. This is Ribonuclease P protein subunit p29 (POP4) from Homo sapiens (Human).